A 182-amino-acid polypeptide reads, in one-letter code: T-cell surface glycoprotein CD3 gamma chain (182 aa).

The N-terminal stretch at 1 to 22 is a signal peptide; it reads MEQGKGLAVLILAIILLQGTLA. Residues 23–116 lie on the Extracellular side of the membrane; that stretch reads QSIKGNHLVK…CIELNAATIS (94 aa). Residues 37 to 94 enclose the Ig-like domain; the sequence is QEDGSVLLTCDAEAKNITWFKDGKMIGFLTEDKKKWNLGSNAKDPRGMYQCKGSQNKS. A disulfide bond links C46 and C87. 2 N-linked (GlcNAc...) asparagine glycosylation sites follow: N52 and N92. A helical transmembrane segment spans residues 117–137; that stretch reads GFLFAEIVSIFVLAVGVYFIA. Residues 138–182 are Cytoplasmic-facing; that stretch reads GQDGVRQSRASDKQTLLPNDQLYQPLKDREDDQYSHLQGNQLRRN. S145 carries the phosphoserine modification. Residue S148 is modified to Phosphoserine; by PKC. In terms of domain architecture, ITAM spans 149–177; it reads DKQTLLPNDQLYQPLKDREDDQYSHLQGN. A Di-leucine motif motif is present at residues 153 to 154; it reads LL.

As to quaternary structure, the TCR-CD3 complex is composed of a CD3D/CD3E and a CD3G/CD3E heterodimers that preferentially associate with TCRalpha and TCRbeta, respectively, to form TCRalpha/CD3E/CD3G and TCRbeta/CD3G/CD3E trimers. In turn, the hexamer interacts with CD3Z homodimer to form the TCR-CD3 complex. Alternatively, TCRalpha and TCRbeta can be replaced by TCRgamma and TCRdelta. In terms of processing, phosphorylated on Tyr residues after T-cell receptor triggering by LCK in association with CD4/CD8. Phosphorylated also by PKC; leading to the TCR complex down-regulation. Post-translationally, phosphorylated on Tyr residues after T-cell receptor triggering by LCK in association with CD4/CD8.

Its subcellular location is the cell membrane. Functionally, part of the TCR-CD3 complex present on T-lymphocyte cell surface that plays an essential role in adaptive immune response. When antigen presenting cells (APCs) activate T-cell receptor (TCR), TCR-mediated signals are transmitted across the cell membrane by the CD3 chains CD3D, CD3E, CD3G and CD3Z. All CD3 chains contain immunoreceptor tyrosine-based activation motifs (ITAMs) in their cytoplasmic domain. Upon TCR engagement, these motifs become phosphorylated by Src family protein tyrosine kinases LCK and FYN, resulting in the activation of downstream signaling pathways. In addition to this role of signal transduction in T-cell activation, CD3G plays an essential role in the dynamic regulation of TCR expression at the cell surface. Indeed, constitutive TCR cycling is dependent on the di-leucine-based (diL) receptor-sorting motif present in CD3G. The polypeptide is T-cell surface glycoprotein CD3 gamma chain (CD3G) (Homo sapiens (Human)).